A 131-amino-acid chain; its full sequence is MQTPVNIPVPVLRLPRGPDGFSRGFAPDGRRAPLRPEVPEIQECPIAQESLESQEQRARAALRERYLRSLLAMVGHQVSFTLHEGVRVAAHFGATDLDVANFYVSQLQTPIGVQAEALLRCSDIISYTFKP.

An N-acetylmethionine modification is found at Met1. The region spanning Met1–Gly29 is the SUZ-C domain. Thr3 is modified (phosphothreonine). Positions Arg65–Pro131 constitute a Sm domain.

The protein belongs to the gemin-7 family. As to quaternary structure, part of the core SMN complex that contains SMN1, GEMIN2/SIP1, DDX20/GEMIN3, GEMIN4, GEMIN5, GEMIN6, GEMIN7, GEMIN8 and STRAP/UNRIP. Part of the SMN-Sm complex that contains SMN1, GEMIN2/SIP1, DDX20/GEMIN3, GEMIN4, GEMIN5, GEMIN6, GEMIN7, GEMIN8, STRAP/UNRIP and the Sm proteins SNRPB, SNRPD1, SNRPD2, SNRPD3, SNRPE, SNRPF and SNRPG. Interacts with GEMIN6; the interaction is direct. Interacts with STRAP/UNRIP; the interaction is direct. Interacts with GEMIN8; the interaction is direct. Interacts with SNRPB, SNRPD2, SNRPD3 and SNRPE; the interaction is direct.

The protein localises to the nucleus. It is found in the nucleoplasm. The protein resides in the gem. It localises to the cytoplasm. Its function is as follows. The SMN complex catalyzes the assembly of small nuclear ribonucleoproteins (snRNPs), the building blocks of the spliceosome, and thereby plays an important role in the splicing of cellular pre-mRNAs. Most spliceosomal snRNPs contain a common set of Sm proteins SNRPB, SNRPD1, SNRPD2, SNRPD3, SNRPE, SNRPF and SNRPG that assemble in a heptameric protein ring on the Sm site of the small nuclear RNA to form the core snRNP (Sm core). In the cytosol, the Sm proteins SNRPD1, SNRPD2, SNRPE, SNRPF and SNRPG are trapped in an inactive 6S pICln-Sm complex by the chaperone CLNS1A that controls the assembly of the core snRNP. To assemble core snRNPs, the SMN complex accepts the trapped 5Sm proteins from CLNS1A forming an intermediate. Binding of snRNA inside 5Sm triggers eviction of the SMN complex, thereby allowing binding of SNRPD3 and SNRPB to complete assembly of the core snRNP. The polypeptide is Gem-associated protein 7 (GEMIN7) (Homo sapiens (Human)).